A 179-amino-acid chain; its full sequence is Auxin-responsive protein IAA15 (179 aa).

The EAR-like (transcriptional repression) signature appears at 21 to 25; that stretch reads LTLAL. A PB1 domain is found at 86–173; sequence RKYVKVALDG…SCKRMRLMKT (88 aa).

The protein belongs to the Aux/IAA family. In terms of assembly, homodimers and heterodimers.

It localises to the nucleus. Functionally, aux/IAA proteins are short-lived transcriptional factors that function as repressors of early auxin response genes at low auxin concentrations. Repression is thought to result from the interaction with auxin response factors (ARFs), proteins that bind to the auxin-responsive promoter element (AuxRE). Formation of heterodimers with ARF proteins may alter their ability to modulate early auxin response genes expression. The sequence is that of Auxin-responsive protein IAA15 (IAA15) from Arabidopsis thaliana (Mouse-ear cress).